We begin with the raw amino-acid sequence, 445 residues long: Argininosuccinate synthase (445 aa).

ATP-binding positions include 17–25 (AFSGGLDTS) and Ala43. An L-citrulline-binding site is contributed by Tyr99. ATP-binding residues include Gly129 and Thr131. L-aspartate-binding residues include Thr131, Asn135, and Asp136. Position 135 (Asn135) interacts with L-citrulline. Residue Asp136 participates in ATP binding. Residues Arg139 and Ser192 each coordinate L-citrulline. Asp194 lines the ATP pocket. L-citrulline-binding residues include Thr201, Glu203, and Glu280.

This sequence belongs to the argininosuccinate synthase family. Type 2 subfamily. As to quaternary structure, homotetramer.

The protein localises to the cytoplasm. It catalyses the reaction L-citrulline + L-aspartate + ATP = 2-(N(omega)-L-arginino)succinate + AMP + diphosphate + H(+). It participates in amino-acid biosynthesis; L-arginine biosynthesis; L-arginine from L-ornithine and carbamoyl phosphate: step 2/3. The sequence is that of Argininosuccinate synthase (argG) from Bradyrhizobium diazoefficiens (strain JCM 10833 / BCRC 13528 / IAM 13628 / NBRC 14792 / USDA 110).